Reading from the N-terminus, the 437-residue chain is Putative galacturan 1,4-alpha-galacturonidase A (437 aa).

An N-terminal signal peptide occupies residues 1-20 (MKLSGSSALLLLGFGLLGHA). 6 N-linked (GlcNAc...) asparagine glycosylation sites follow: N30, N101, N110, N161, N196, and N203. One copy of the PbH1 1 repeat lies at 222–243 (SDHVTITNWVYEGGDDAVAFKP). Residue D236 is the Proton donor of the active site. N-linked (GlcNAc...) asparagine glycans are attached at residues N244, N252, N278, N324, N352, N371, N382, and N387. PbH1 repeat units follow at residues 245 to 265 (STNIHVENVTVYGGPGIAFGS), 276 to 302 (VENITVKNANFQPSSQRAMNSGIYFKS), and 322 to 343 (VRNVTVEDITFKDVQLPIYIDT). Cysteines 396 and 402 form a disulfide.

It belongs to the glycosyl hydrolase 28 family.

It is found in the secreted. The enzyme catalyses [(1-&gt;4)-alpha-D-galacturonosyl](n) + H2O = alpha-D-galacturonate + [(1-&gt;4)-alpha-D-galacturonosyl](n-1). Functionally, specific in hydrolyzing the terminal glycosidic bond of polygalacturonic acid and oligogalacturonates. In Aspergillus flavus (strain ATCC 200026 / FGSC A1120 / IAM 13836 / NRRL 3357 / JCM 12722 / SRRC 167), this protein is Putative galacturan 1,4-alpha-galacturonidase A (rgxA).